The sequence spans 267 residues: MNKTRYRLDVAYDGANFCGWAPQPGLRTVGGLILDALRLICSEPPDIVVAARTDAGVHALQQVCHVDLISSPDPVWLLHRLRSLLKSETDLHILSAVKAPVNFHARFSAIGRRYVYRVIDKRSSWYPQNRYFVYRVNAFLQDYRMRRAASGLIGLKDFGAFCKPRRMGSTVRHLRQFEVIRQPDGQIHFFLESDAFCHSMVRNLVGSLIEVGRGALTLQDLFCYTKIAKRTPKIPTLPPHALTLIGIDYPQEHLFECQNRKTRQKRT.

The Nucleophile role is filled by Asp54. Position 114 (Tyr114) interacts with substrate.

The protein belongs to the tRNA pseudouridine synthase TruA family. In terms of assembly, homodimer.

The enzyme catalyses uridine(38/39/40) in tRNA = pseudouridine(38/39/40) in tRNA. Formation of pseudouridine at positions 38, 39 and 40 in the anticodon stem and loop of transfer RNAs. In Tropheryma whipplei (strain Twist) (Whipple's bacillus), this protein is tRNA pseudouridine synthase A.